A 237-amino-acid chain; its full sequence is rRNA-processing protein EFG1 (237 aa).

Residues 1-24 form a disordered region; the sequence is MPKTVKNPKNNKSRSRGAPIQVAE. 2 coiled-coil regions span residues 53–113 and 166–186; these read DKKI…ISQT and LKIT…LMEE. Residues 206-237 form a disordered region; it reads NDKTQKAVLTEEIDAPEQKQDEQQEEQDDFFE. Residues 228–237 show a composition bias toward acidic residues; sequence QQEEQDDFFE.

The protein belongs to the EFG1 family.

The protein localises to the nucleus. It localises to the nucleolus. Its function is as follows. Involved in rRNA processing. In Candida albicans (strain SC5314 / ATCC MYA-2876) (Yeast), this protein is rRNA-processing protein EFG1.